A 293-amino-acid chain; its full sequence is Elongation factor Ts (293 aa).

Residues 80 to 83 are involved in Mg(2+) ion dislocation from EF-Tu; the sequence is TDFV.

The protein belongs to the EF-Ts family.

The protein resides in the cytoplasm. In terms of biological role, associates with the EF-Tu.GDP complex and induces the exchange of GDP to GTP. It remains bound to the aminoacyl-tRNA.EF-Tu.GTP complex up to the GTP hydrolysis stage on the ribosome. The polypeptide is Elongation factor Ts (Enterococcus faecalis (strain ATCC 700802 / V583)).